A 175-amino-acid polypeptide reads, in one-letter code: Putative lipoprotein LppN (175 aa).

The N-terminal stretch at 1–20 (MRLPGRHVLYALSAVTMLAA) is a signal peptide. Cys21 is lipidated: N-palmitoyl cysteine. The S-diacylglycerol cysteine moiety is linked to residue Cys21. Residues 31–56 (ASTNMNPTNPPATAETATVSPTPAPQ) form a disordered region. Positions 33–48 (TNMNPTNPPATAETAT) are enriched in low complexity. Prevents bacterial uptake by a human macrophage-like cell line stretches follow at residues 61–80 (ETWINLQVGDCLADLPPADL), 101–120 (RAPVAVDAAVVSMANRDCAA), and 121–140 (GFAPYTGQSVDTSPYSVAYL).

The protein localises to the cell membrane. The protein resides in the cell surface. Its function is as follows. Probably involved in bacterial recognition and uptake by its host (human). This is Putative lipoprotein LppN (lppN) from Mycobacterium tuberculosis (strain ATCC 25618 / H37Rv).